A 224-amino-acid chain; its full sequence is Coiled-coil domain-containing protein 43 (224 aa).

K95 is covalently cross-linked (Glycyl lysine isopeptide (Lys-Gly) (interchain with G-Cter in SUMO1)). Coiled-coil stretches lie at residues 121 to 145 (SEEE…EDEA) and 177 to 218 (RKLE…KRTQ). Residues 138–149 (VTDEEDEADEKD) are compositionally biased toward acidic residues. Disordered stretches follow at residues 138–157 (VTDE…TTMN) and 176–224 (ARKL…ERKR). T139 is subject to Phosphothreonine. Positions 176-211 (ARKLERDSLRDESQRKKEQDKLQRERDKLAKQERKE) are enriched in basic and acidic residues. The segment covering 212–224 (KEKKRTQRGERKR) has biased composition (basic residues).

It belongs to the CCDC43 family.

The protein is Coiled-coil domain-containing protein 43 (CCDC43) of Homo sapiens (Human).